The sequence spans 752 residues: Photosystem I P700 chlorophyll a apoprotein A1 (752 aa).

A run of 8 helical transmembrane segments spans residues 73-96, 159-182, 198-222, 294-312, 349-372, 388-414, 436-458, and 533-551; these read IFSAHFGQLSVIFLWISGMHFHGA, LYWIAIGGLAMSAIMLFAGWFHYH, MNHHLAGLLGLGCLSWSGHQIHVAL, IAHHHLALAVLFIFAGHMY, WHAQLAINLAMMGSLSIIVAHHMY, LSLFTHHMWIGGFCVTGGAAHAAIFMV, SIIAHLNWVCIFLGCHAFGFYIH, and FMVHHIHAFTIHVTVLILL. [4Fe-4S] cluster is bound by residues Cys575 and Cys584. Helical transmembrane passes span 591–612 and 666–688; these read HVFLGLFWMYNSISVVIFHFSW and ASAYGLIFLGAHFIWAFSLMFLF. His677 serves as a coordination point for chlorophyll a'. The chlorophyll a site is built by Met685 and Tyr693. Trp694 contacts phylloquinone. A helical transmembrane segment spans residues 726-746; the sequence is AVGLAHYLLGGIGTTWAFFLA.

Belongs to the PsaA/PsaB family. In terms of assembly, the PsaA/B heterodimer binds the P700 chlorophyll special pair and subsequent electron acceptors. PSI consists of a core antenna complex that captures photons, and an electron transfer chain that converts photonic excitation into a charge separation. The eukaryotic PSI reaction center is composed of at least 11 subunits. P700 is a chlorophyll a/chlorophyll a' dimer, A0 is one or more chlorophyll a, A1 is one or both phylloquinones and FX is a shared 4Fe-4S iron-sulfur center. serves as cofactor.

It is found in the plastid. Its subcellular location is the chloroplast thylakoid membrane. It catalyses the reaction reduced [plastocyanin] + hnu + oxidized [2Fe-2S]-[ferredoxin] = oxidized [plastocyanin] + reduced [2Fe-2S]-[ferredoxin]. PsaA and PsaB bind P700, the primary electron donor of photosystem I (PSI), as well as the electron acceptors A0, A1 and FX. PSI is a plastocyanin/cytochrome c6-ferredoxin oxidoreductase, converting photonic excitation into a charge separation, which transfers an electron from the donor P700 chlorophyll pair to the spectroscopically characterized acceptors A0, A1, FX, FA and FB in turn. Oxidized P700 is reduced on the lumenal side of the thylakoid membrane by plastocyanin or cytochrome c6. This is Photosystem I P700 chlorophyll a apoprotein A1 from Phaeodactylum tricornutum (strain CCAP 1055/1).